Here is a 243-residue protein sequence, read N- to C-terminus: Uridylate kinase (243 aa).

15–18 (KMSG) contacts ATP. G57 contacts UMP. The ATP site is built by G58 and R62. Residues D77 and 138 to 145 (TGNPLVTT) contribute to the UMP site. T165, N166, Y171, and D174 together coordinate ATP.

It belongs to the UMP kinase family. Homohexamer.

The protein resides in the cytoplasm. The catalysed reaction is UMP + ATP = UDP + ADP. It participates in pyrimidine metabolism; CTP biosynthesis via de novo pathway; UDP from UMP (UMPK route): step 1/1. Its activity is regulated as follows. Inhibited by UTP. Its function is as follows. Catalyzes the reversible phosphorylation of UMP to UDP. The chain is Uridylate kinase from Coxiella burnetii (strain RSA 493 / Nine Mile phase I).